The primary structure comprises 512 residues: Transactivator/viroplasmin protein (512 aa).

Disordered regions lie at residues 76–123 and 474–512; these read GNER…NPVA and ADSS…IPSI. Over residues 476-487 the composition is skewed to polar residues; sequence SSSTSGEQNNVE. Positions 499 to 512 are enriched in basic and acidic residues; the sequence is YDERSDDHKRIPSI.

The protein belongs to the caulimoviridae viroplasmin family.

It is found in the host cytoplasm. Functionally, enhances the translation of downstream ORFs on polycistronic mRNAs derived from figwort mosaic virus. The polypeptide is Transactivator/viroplasmin protein (Figwort mosaic virus (strain DxS) (FMV)).